The primary structure comprises 245 residues: Orotidine 5'-phosphate decarboxylase (245 aa).

Residues aspartate 22, lysine 44, 71 to 80 (DLKFHDIPNT), threonine 131, arginine 192, glutamine 201, glycine 221, and arginine 222 each bind substrate. Lysine 73 serves as the catalytic Proton donor.

It belongs to the OMP decarboxylase family. Type 1 subfamily. In terms of assembly, homodimer.

The enzyme catalyses orotidine 5'-phosphate + H(+) = UMP + CO2. Its pathway is pyrimidine metabolism; UMP biosynthesis via de novo pathway; UMP from orotate: step 2/2. Catalyzes the decarboxylation of orotidine 5'-monophosphate (OMP) to uridine 5'-monophosphate (UMP). This Shigella dysenteriae serotype 1 (strain Sd197) protein is Orotidine 5'-phosphate decarboxylase.